A 215-amino-acid polypeptide reads, in one-letter code: MHRDAWLPRPAFSLTGLSLFFSLVPPGRSMEVTVPATLNVLNGSDARLPCTFNSCYTVNHKQFSLNWTYQECNNCSEEMFLQFRMKIINLKLERFQDRVEFSGNPSKYDVSVMLRNVQPEDEGIYNCYIMNPPDRHRGHGKIHLQVLXEEPPERDSTVAVIVGASVGGFLAVVILVLMVVKCVRRKKEQKLSTDDLKTEEEGKTDGEGNPDDGAK.

An N-terminal signal peptide occupies residues 1 to 29; it reads MHRDAWLPRPAFSLTGLSLFFSLVPPGRS. Residues 30-157 lie on the Extracellular side of the membrane; the sequence is MEVTVPATLN…XEEPPERDST (128 aa). The 123-residue stretch at 32 to 154 folds into the Ig-like C2-type domain; that stretch reads VTVPATLNVL…QVLXEEPPER (123 aa). Asn-42, Asn-66, and Asn-74 each carry an N-linked (GlcNAc...) asparagine glycan. Cystine bridges form between Cys-50/Cys-127 and Cys-72/Cys-75. A helical transmembrane segment spans residues 158-179; sequence VAVIVGASVGGFLAVVILVLMV. Residues 180–215 lie on the Cytoplasmic side of the membrane; sequence VKCVRRKKEQKLSTDDLKTEEEGKTDGEGNPDDGAK. A disordered region spans residues 187–215; sequence KEQKLSTDDLKTEEEGKTDGEGNPDDGAK. Residues 189–215 are compositionally biased toward basic and acidic residues; sequence QKLSTDDLKTEEEGKTDGEGNPDDGAK. Position 192 is a phosphoserine (Ser-192). At Thr-204 the chain carries Phosphothreonine.

Belongs to the sodium channel auxiliary subunit SCN2B (TC 8.A.17) family. In terms of assembly, a voltage-gated sodium (Nav) channel consists of an ion-conducting pore-forming alpha subunit functional on its own that is regulated by one or more beta subunits. The beta subunit SCN2B is disulfide-linked to the pore-forming alpha subunit. Interacts with SCN1A; regulatory subunit of SCN1A/Nav1.1. Interacts with SCN2A; regulatory subunit of SCN2A/Nav1.2. Interacts with SCN3A; regulatory subunit of SCN3A/Nav1.3. Interacts with SCN5A; regulatory subunit of SCN5A/Nav1.5. Interacts with SCN8A; regulatory subunit of SCN8A/Nav1.6. Interacts with SCN9A; regulatory subunit of SCN9A/Nav1.7. Interacts with SCN10A; regulatory subunit of SCN10A/Nav1.8. Interacts with TNR; may play a crucial role in clustering and regulation of activity of SCN2B-containing Nav channels at nodes of Ranvier.

Its subcellular location is the cell membrane. The protein localises to the cell projection. It localises to the axon. Its function is as follows. Regulatory subunit of multiple voltage-gated sodium (Nav) channels, that directly mediate the depolarization of excitable membranes. Navs, also called VGSCs (voltage-gated sodium channels) or VDSCs (voltage-dependent sodium channels), operate by switching between closed and open conformations depending on the voltage difference across the membrane. In the open conformation they allow Na(+) ions to selectively pass through the pore, along their electrochemical gradient. The influx of Na+ ions provokes membrane depolarization, initiating the propagation of electrical signals throughout cells and tissues. The accessory beta subunits participate in localization and functional modulation of the Nav channels. Modulates the activity of SCN1A/Nav1.1, SCN2A/Nav1.2, SCN2A/Nav1.3, SCN5A/Nav1.5, SCN8A/Nav1.6, SCN9A/Nav1.7 and SCN10A/Nav1.8. The polypeptide is Sodium channel regulatory subunit beta-2 (Canis lupus familiaris (Dog)).